The chain runs to 160 residues: Transcription elongation factor GreA 2 (160 aa).

The stretch at 9–73 (MTEEGKVKLE…RIKTVEHMLQ (65 aa)) forms a coiled coil.

The protein belongs to the GreA/GreB family.

Functionally, necessary for efficient RNA polymerase transcription elongation past template-encoded arresting sites. The arresting sites in DNA have the property of trapping a certain fraction of elongating RNA polymerases that pass through, resulting in locked ternary complexes. Cleavage of the nascent transcript by cleavage factors such as GreA or GreB allows the resumption of elongation from the new 3'terminus. GreA releases sequences of 2 to 3 nucleotides. This chain is Transcription elongation factor GreA 2, found in Lactiplantibacillus plantarum (strain ATCC BAA-793 / NCIMB 8826 / WCFS1) (Lactobacillus plantarum).